Here is a 333-residue protein sequence, read N- to C-terminus: Foldase protein PrsA (333 aa).

An N-terminal signal peptide occupies residues 1 to 22 (MKKSTKLLAGIVTLASAMTLAA). C23 carries N-palmitoyl cysteine lipidation. A lipid anchor (S-diacylglycerol cysteine) is attached at C23. In terms of domain architecture, PpiC spans 145-240 (TPEMTTQVIT…NKFYIVKVTK (96 aa)). Residues 301 to 333 (DKKASKANTSKSDQKTSSDSSKDSQSSKSKSEK) are disordered. The segment covering 312–322 (SDQKTSSDSSK) has biased composition (basic and acidic residues). Residues 323 to 333 (DSQSSKSKSEK) show a composition bias toward low complexity.

It belongs to the PrsA family.

It is found in the cell membrane. It catalyses the reaction [protein]-peptidylproline (omega=180) = [protein]-peptidylproline (omega=0). Plays a major role in protein secretion by helping the post-translocational extracellular folding of several secreted proteins. This is Foldase protein PrsA from Streptococcus equi subsp. zooepidemicus (strain H70).